The sequence spans 364 residues: Aminomethyltransferase (364 aa).

This sequence belongs to the GcvT family. The glycine cleavage system is composed of four proteins: P, T, L and H.

The enzyme catalyses N(6)-[(R)-S(8)-aminomethyldihydrolipoyl]-L-lysyl-[protein] + (6S)-5,6,7,8-tetrahydrofolate = N(6)-[(R)-dihydrolipoyl]-L-lysyl-[protein] + (6R)-5,10-methylene-5,6,7,8-tetrahydrofolate + NH4(+). Functionally, the glycine cleavage system catalyzes the degradation of glycine. In Geobacillus sp. (strain WCH70), this protein is Aminomethyltransferase.